A 246-amino-acid polypeptide reads, in one-letter code: Probable site-specific recombinase in afa region (246 aa).

Residues 40-225 enclose the Tyr recombinase domain; that stretch reads ATPAYLLAPE…FALDMAATLA (186 aa). Catalysis depends on residues R75, K102, H177, R180, and H203. The active-site O-(3'-phospho-DNA)-tyrosine intermediate is Y212.

This sequence belongs to the 'phage' integrase family.

This is Probable site-specific recombinase in afa region (int) from Escherichia coli.